Here is a 1267-residue protein sequence, read N- to C-terminus: Probable ATP-dependent RNA helicase DHR1 (1267 aa).

Disordered stretches follow at residues 1–67, 168–233, and 255–313; these read MGTY…EPLT, YEPK…SNIK, and EELK…DQND. 2 stretches are compositionally biased toward basic and acidic residues: residues 7-25 and 32-43; these read RFNE…ELKR and TRQDENDERVEN. A compositionally biased stretch (acidic residues) spans 175–192; it reads EYGEGGSSEDDDGEDDFE. Phosphoserine is present on Ser181. Residues 202–217 show a composition bias toward basic and acidic residues; sequence TDNEEKKSSGFIDHRP. The span at 264–284 shows a compositional bias: acidic residues; that stretch reads DEMDFDTTSEDDDEEEDQEEE. Residues 401 to 580 enclose the Helicase ATP-binding domain; it reads MEAIHHNDVV…KTLFPIAPPV (180 aa). An ATP-binding site is contributed by 414–421; it reads GETGSGKT. The short motif at 516–519 is the DEAH box element; the sequence is DEAH. The 184-residue stretch at 675–858 folds into the Helicase C-terminal domain; it reads DIDFSVQVID…SIVLQMKSMA (184 aa). Disordered regions lie at residues 693 to 720 and 955 to 976; these read RYEE…EVLT and PNPD…PGMD. The span at 695-719 shows a compositional bias: acidic residues; sequence EEDEGNSGNGEDEEDEEEEGFEEVL.

It belongs to the DEAD box helicase family. DEAH subfamily. Interacts with snoRNA U3. Component of the ribosomal small subunit (SSU) processome composed of at least 40 protein subunits and snoRNA U3.

The protein resides in the nucleus. It is found in the nucleolus. The enzyme catalyses ATP + H2O = ADP + phosphate + H(+). Functionally, probable ATP-binding RNA helicase. Required for 18S rRNA synthesis. May play a role in restructuring of the pre-rRNA. This chain is Probable ATP-dependent RNA helicase DHR1 (ECM16), found in Saccharomyces cerevisiae (strain ATCC 204508 / S288c) (Baker's yeast).